The chain runs to 265 residues: Taurine import ATP-binding protein TauB (265 aa).

The region spanning 7-236 (QNLNMIFKTP…MGIDGDLREI (230 aa)) is the ABC transporter domain. 41–48 (GPSGCGKT) serves as a coordination point for ATP.

Belongs to the ABC transporter superfamily. Taurine importer (TC 3.A.1.17.1) family. In terms of assembly, the complex is composed of two ATP-binding proteins (TauB), two transmembrane proteins (TauC) and a solute-binding protein (TauA).

It localises to the cell inner membrane. The enzyme catalyses taurine(out) + ATP + H2O = taurine(in) + ADP + phosphate + H(+). Functionally, part of the ABC transporter complex TauABC involved in taurine import. Responsible for energy coupling to the transport system. This is Taurine import ATP-binding protein TauB from Pelagibacter ubique (strain HTCC1062).